The primary structure comprises 123 residues: Sirohydrochlorin cobaltochelatase (123 aa).

The active-site Proton acceptor is His9. His9 is a Co(2+) binding site. Substrate contacts are provided by residues Glu43 and 68–73 (FAAGMH). Position 73 (His73) interacts with Co(2+).

The protein belongs to the CbiX family. CbiXS subfamily. Homotetramer; dimer of dimers.

It carries out the reaction Co-sirohydrochlorin + 2 H(+) = sirohydrochlorin + Co(2+). It functions in the pathway cofactor biosynthesis; adenosylcobalamin biosynthesis; cob(II)yrinate a,c-diamide from sirohydrochlorin (anaerobic route): step 1/10. Its function is as follows. Catalyzes the insertion of Co(2+) into sirohydrochlorin as part of the anaerobic pathway to cobalamin biosynthesis. The chain is Sirohydrochlorin cobaltochelatase from Sulfolobus acidocaldarius (strain ATCC 33909 / DSM 639 / JCM 8929 / NBRC 15157 / NCIMB 11770).